A 227-amino-acid chain; its full sequence is AN1-type zinc finger protein 3 (227 aa).

The A20-type zinc-finger motif lies at 12 to 44; it reads PSLPPRCPCGFWGSSKTMNLCSKCFADFQKKQP. 4 residues coordinate Zn(2+): Cys18, Cys20, Cys32, and Cys35. The segment at 41-151 is disordered; sequence KKQPDDDSTP…RPEESGRSKQ (111 aa). Low complexity-rich tracts occupy residues 49–59 and 66–77; these read TPSTSNSQSDL and SDNNNTSVTTPT. Composition is skewed to polar residues over residues 78–94 and 111–127; these read LSPSQQSLPTELNVTSP and ITPTKRSCGADSQSESE. A compositionally biased stretch (basic and acidic residues) spans 135–148; that stretch reads RLVENPERPEESGR. The AN1-type zinc finger occupies 151–200; the sequence is QKSRRRCFQCQTKLELVQQELGSCRCGYVFCMLHRLPEQHDCTFDHMGRG. Zn(2+) is bound by residues Cys157, Cys160, Cys174, Cys176, Cys181, His184, His190, and Cys192.

The protein is AN1-type zinc finger protein 3 (Zfand3) of Rattus norvegicus (Rat).